The following is a 319-amino-acid chain: RNA polymerase II holoenzyme cyclin-like subunit (319 aa).

The Cyclin N-terminal domain occupies 53–142 (QQLIRLAKRL…LGECEFFMIS (90 aa)). The span at 237 to 251 (QGQQAQGGMPEPAAA) shows a compositional bias: low complexity. Positions 237 to 261 (QGQQAQGGMPEPAAAEPKEKRQQDR) are disordered. The segment covering 252–261 (EPKEKRQQDR) has biased composition (basic and acidic residues).

It belongs to the cyclin family. Cyclin C subfamily. Component of the SRB8-11 complex, a regulatory module of the Mediator complex. Interacts with SSN3/FCK1.

Its subcellular location is the nucleus. Its function is as follows. Component of the SRB8-11 complex. The SRB8-11 complex is a regulatory module of the Mediator complex which is itself involved in regulation of basal and activated RNA polymerase II-dependent transcription. The SRB8-11 complex may be involved in the transcriptional repression of a subset of genes regulated by Mediator. It may inhibit the association of the Mediator complex with RNA polymerase II to form the holoenzyme complex. The SRB8-11 complex phosphorylates the C-terminal domain (CTD) of the largest subunit of RNA polymerase II. May play a role in signal transduction pathways regulating secondary metabolism and fungal development (conidiation). The chain is RNA polymerase II holoenzyme cyclin-like subunit (SSN8) from Gibberella moniliformis (Maize ear and stalk rot fungus).